The sequence spans 874 residues: Leucine--tRNA ligase (874 aa).

The short motif at 47–57 is the 'HIGH' region element; the sequence is PYPSGKLHMGH. A 'KMSKS' region motif is present at residues 636–640; it reads KMSKS. Residue lysine 639 participates in ATP binding.

It belongs to the class-I aminoacyl-tRNA synthetase family.

Its subcellular location is the cytoplasm. The catalysed reaction is tRNA(Leu) + L-leucine + ATP = L-leucyl-tRNA(Leu) + AMP + diphosphate. This Acinetobacter baumannii (strain AB0057) protein is Leucine--tRNA ligase.